The sequence spans 295 residues: F-box only protein 8 (295 aa).

The region spanning 35–80 is the F-box domain; it reads TWVARYIPQDLLIEILTRLPPKSVMRFKCVSKFWSSLLSSRYFCNR.

The protein is F-box only protein 8 (FBX8) of Arabidopsis thaliana (Mouse-ear cress).